The sequence spans 177 residues: Anti-apoptotic protein NR13 (177 aa).

Residues 75–94 (LEAEGGLNWGRLLALVVFTG) carry the BH1 motif. A helical membrane pass occupies residues 86–106 (LLALVVFTGTLAAALAESGCE). The short motif at 126 to 141 (EWLEEHGGWDGFCRFF) is the BH2 element. The chain crosses the membrane as a helical span at residues 156 to 176 (SNAIMAAAGFGIAGLAFLLVV).

It belongs to the Bcl-2 family. In terms of assembly, interacts with BAX. In terms of tissue distribution, expressed preferentially in heart, skeletal muscle, retina, optical tectum and bursa of Fabricius.

The protein localises to the cell membrane. Its function is as follows. Shows anti-apoptotic properties. Counteract the pro-apoptotic activity of BAX. This is Anti-apoptotic protein NR13 (NR13) from Gallus gallus (Chicken).